A 2259-amino-acid polypeptide reads, in one-letter code: Golgin subfamily A member 4 (2259 aa).

The interval 1–54 (MFKKLKQKISEEQQQLQQALAPAQASSSSSTPTRTRSRTSSFTDQLDDATPNRE) is disordered. Residue Ser-10 is modified to Phosphoserine. Residues 12 to 41 (EQQQLQQALAPAQASSSSSTPTRTRSRTSS) are compositionally biased toward low complexity. Thr-39 is subject to Phosphothreonine. Phosphoserine occurs at positions 41, 104, and 111. Positions 165–235 (SLSREQLLQR…EELQMDQQAK (71 aa)) are interaction with MACF1. The stretch at 167–2182 (SREQLLQRLR…SYEKSVCAAA (2016 aa)) forms a coiled coil. Composition is skewed to basic and acidic residues over residues 1932 to 1946 (LEDR…HVIE) and 1954 to 1977 (DGRH…LSKE). The segment at 1932 to 1977 (LEDRPEENSKSHVIESKLGTPMDGRHSDLESKLAGSEREKQKLSKE) is disordered. Positions 2199-2246 (LFGEPTEFEYLRKVLFEYMMGRETKTMAKVITTVLRFPDDQAQKILER) constitute a GRIP domain.

As to quaternary structure, homodimer. Interacts with GTP-bound ARL1 and ARL3. Interacts with MACF1. Directly interacts with TBC1D23. Interacts with FAM91A1; this interaction may be mediated by TBC1D23. As to expression, expressed in the head of epididymal sperm but not in testicular sperm (at protein level).

The protein localises to the cytoplasm. Its subcellular location is the golgi apparatus membrane. It is found in the golgi apparatus. The protein resides in the trans-Golgi network membrane. Its function is as follows. Involved in vesicular trafficking at the Golgi apparatus level. May play a role in delivery of transport vesicles containing GPI-linked proteins from the trans-Golgi network through its interaction with MACF1. Involved in endosome-to-Golgi trafficking. In Rattus norvegicus (Rat), this protein is Golgin subfamily A member 4.